The following is a 495-amino-acid chain: 2-carboxy-D-arabinitol-1-phosphatase (495 aa).

Residues 1–12 (MLLFAPTPPPSP) show a composition bias toward pro residues. A disordered region spans residues 1 to 23 (MLLFAPTPPPSPATAHRRPGGSA). The transit peptide at 1–50 (MLLFAPTPPPSPATAHRRPGGSAASCIRCSSVRELDRSPSRPPLPPLAEA) directs the protein to the chloroplast. Residue His58 is the Tele-phosphohistidine intermediate of the active site. Residue Glu132 is the Proton donor/acceptor of the active site.

This sequence belongs to the phosphoglycerate mutase family.

Its subcellular location is the plastid. It localises to the chloroplast stroma. The catalysed reaction is 2-carboxy-D-arabinitol 1-phosphate + H2O = 2-carboxy-D-arabinitol + phosphate. With respect to regulation, inactivated by oxidized glutathione (GSSG) at pH 8.0. In terms of biological role, phosphoglycerate mutase-like protein lacking PGM activity, but having 2-carboxy-D-arabinitol 1-phosphate (CA1P) phosphatase activity. Can dephosphorylate the closely related compounds 2-carboxy-D-arabinitol 1,5-bisphosphate (CABP) and 2-carboxy-D-ribitol-1,5-bisphosphate(CRBP), and 2,3-diphosphoglycerate. Prevents the accumulation of D-glycero-2,3-pentodiulose-1,5-bisphosphate (PDBP) a potent inhibitor of ribulose-1,5-bisphosphate carboxylase (RuBisCO). PDBP is produced during the oxidation of ribulose-1,5-bisphosphate, the substrate of RuBisCO. This Triticum aestivum (Wheat) protein is 2-carboxy-D-arabinitol-1-phosphatase.